Reading from the N-terminus, the 159-residue chain is MSDRVYLTRDGYNRLKDELHELLHVTRAEVLEKIAEARSHGDLSENAEYDAAREQQSQTEARIADLESKLSSATILDPKHIKTDKVYILTSVELLNLDDKKETLEYTLVSSEESDSDLGKISVRSPVGRALIGKAVGDKVTIIVPKGELHYEVKKIFVK.

A coiled-coil region spans residues 44-75; that stretch reads SENAEYDAAREQQSQTEARIADLESKLSSATI.

The protein belongs to the GreA/GreB family.

Its function is as follows. Necessary for efficient RNA polymerase transcription elongation past template-encoded arresting sites. The arresting sites in DNA have the property of trapping a certain fraction of elongating RNA polymerases that pass through, resulting in locked ternary complexes. Cleavage of the nascent transcript by cleavage factors such as GreA or GreB allows the resumption of elongation from the new 3'terminus. GreA releases sequences of 2 to 3 nucleotides. In Chlorobium phaeovibrioides (strain DSM 265 / 1930) (Prosthecochloris vibrioformis (strain DSM 265)), this protein is Transcription elongation factor GreA.